Reading from the N-terminus, the 158-residue chain is Pathogenesis-related protein 2 (158 aa).

The protein belongs to the BetVI family.

The chain is Pathogenesis-related protein 2 (PR2) from Petroselinum crispum (Parsley).